The chain runs to 219 residues: Capsid protein (219 aa).

The tract at residues R5–R29 is nuclear localization signals.

This sequence belongs to the circoviridae capsid protein family. Homomultimer. Assembles in the nucleus, presumably in an immature form, then migrates to the cytoplasm once assembled as mature virion. Interacts with Rep; this interaction relocates Rep into the nucleus.

It is found in the host nucleus. Its subcellular location is the virion. Its function is as follows. Self-assembles to form the virion icosahedral capsid with a T=1 symmetry. This very small capsid (17-22 nm in diameter) allows the virus to be very stable in the environment and resistant to some disinfectants, including detergents. Essential for the initial attachment to heparan sulfate moieties and chondroitin sulfate B of the host cell surface proteoglycans. After attachment, the virus is endocytosed and traffics to the nucleus. The capsid protein binds and transports the viral genome and Rep across the nuclear envelope. The chain is Capsid protein (Cap) from Homo sapiens (Human).